A 914-amino-acid polypeptide reads, in one-letter code: MAETLSGLGDSGAAGAAALSSASSETGTRRLSDLRVIDLRAELRKRNVDSSGNKSVLMERLKKAIEDEGGNPDEIEITSEGNKKTSKRSSKGRKPEEEGVEDNGLEENSGDGQEDVETSLENLQDIDIMDISVLDEAEIDNGSVADCVEDDDADNLQESLSDSRELVEGEMKELPEQLQEHAIEDKETINNLDTSSSDFTILQEIEEPSLEPENEKILDILGETCKSEPVKEESSELEQPFAQDTSSVGPDRKLAEEEDLFDSAHPEEGDLDLASESTAHAQSSKADSLLAVVKREPAEQPGDGERTDCEPVGLEPAVEQSSAASELAEASSEELAEAPTEAPSPEARDSKEDGRKFDFDACNEVPPAPKESSTSEGADQKMSSPEDDSDTKRLSKEEKGRSSCGRNFWVSGLSSTTRATDLKNLFSKYGKVVGAKVVTNARSPGARCYGFVTMSTAEEATKCINHLHKTELHGKMISVEKAKNEPVGKKTSDKRDSDGKKEKSSNSDRSANLKRDDKCDRKDDAKKGDDGSGEKSKDQDDQKPGPSERSRATKSGSRGTERTVVMDKSKGVPVISVKTSGSKERASKSLDRKSASREKRSVVSFDKVKEPRKSRDSESHRVRERSEREQRMQAQWEREERERLEIARERLAFQRQRLERERMERERLERERMHVEHERRREQERIHREREELRRQQELRYEQERRPAVRRPYDLDRRDDAYWPEAKRAALDERYHSDFNRQDRFHDFDHRDRGRYPDHSVDRREGSRSMMGEREGQHYPERHGGPERHGRDSRDGWGGYGSDKRMSEGRGLPPPPRRDWGDHGRREDDRAWQGTADGGMMDRDHKRWQGGERSMSGHSGPGHMMNRGGMSGRGSFAPGGASRGHPIPHGGMQGGFGGQSRGSRPSDARFTRRY.

A compositionally biased stretch (low complexity) spans 1–24 (MAETLSGLGDSGAAGAAALSSASS). The interval 1 to 33 (MAETLSGLGDSGAAGAAALSSASSETGTRRLSD) is disordered. Ala-2 is modified (N-acetylalanine). Phosphoserine is present on residues Ser-24 and Ser-55. Residues 31–65 (LSDLRVIDLRAELRKRNVDSSGNKSVLMERLKKAI) enclose the SAP domain. The tract at residues 64–117 (AIEDEGGNPDEIEITSEGNKKTSKRSSKGRKPEEEGVEDNGLEENSGDGQEDVE) is disordered. Positions 67–77 (DEGGNPDEIEI) are enriched in acidic residues. Position 79 is a phosphoserine (Ser-79). Over residues 98–117 (EGVEDNGLEENSGDGQEDVE) the composition is skewed to acidic residues. Residues Lys-172 and Lys-186 each participate in a glycyl lysine isopeptide (Lys-Gly) (interchain with G-Cter in SUMO2) cross-link. A Phosphothreonine modification is found at Thr-188. 3 positions are modified to phosphoserine: Ser-195, Ser-197, and Ser-209. The disordered stretch occupies residues 221 to 407 (LGETCKSEPV…EKGRSSCGRN (187 aa)). Basic and acidic residues predominate over residues 225-234 (CKSEPVKEES). Residue Lys-231 forms a Glycyl lysine isopeptide (Lys-Gly) (interchain with G-Cter in SUMO) linkage. Over residues 275–286 (SESTAHAQSSKA) the composition is skewed to polar residues. Residues 293-309 (VKREPAEQPGDGERTDC) are compositionally biased toward basic and acidic residues. Residue Lys-294 forms a Glycyl lysine isopeptide (Lys-Gly) (interchain with G-Cter in SUMO) linkage. A compositionally biased stretch (low complexity) spans 319–330 (EQSSAASELAEA). Residues 346–359 (EARDSKEDGRKFDF) are compositionally biased toward basic and acidic residues. Over residues 371–383 (ESSTSEGADQKMS) the composition is skewed to polar residues. Lys-381 participates in a covalent cross-link: Glycyl lysine isopeptide (Lys-Gly) (interchain with G-Cter in SUMO2). A phosphoserine mark is found at Ser-383 and Ser-384. Residues 390–401 (DTKRLSKEEKGR) show a composition bias toward basic and acidic residues. Residue Lys-392 forms a Glycyl lysine isopeptide (Lys-Gly) (interchain with G-Cter in SUMO2) linkage. In terms of domain architecture, RRM spans 406–484 (RNFWVSGLSS…KMISVEKAKN (79 aa)). A Phosphoserine modification is found at Ser-415. Basic and acidic residues-rich tracts occupy residues 477 to 551 (ISVE…ERSR) and 559 to 570 (GTERTVVMDKSK). Disordered regions lie at residues 477–636 (ISVE…QAQW), 670–706 (RERMHVEHERRREQERIHREREELRRQQELRYEQERR), and 748–914 (FDHR…TRRY). Glycyl lysine isopeptide (Lys-Gly) (interchain with G-Cter in SUMO2) cross-links involve residues Lys-483, Lys-514, Lys-543, and Lys-570. The interval 528-791 (GDDGSGEKSK…RHGGPERHGR (264 aa)) is interaction with POLR2A; SFRS1; SFRS9 and SFRS10. Lys-578 participates in a covalent cross-link: Glycyl lysine isopeptide (Lys-Gly) (interchain with G-Cter in SUMO1); alternate. Residue Lys-578 forms a Glycyl lysine isopeptide (Lys-Gly) (interchain with G-Cter in SUMO2); alternate linkage. A phosphoserine mark is found at Ser-580, Ser-582, Ser-601, and Ser-604. Positions 581–636 (GSKERASKSLDRKSASREKRSVVSFDKVKEPRKSRDSESHRVRERSEREQRMQAQW) are enriched in basic and acidic residues. The Nuclear localization signal motif lies at 599-616 (KRSVVSFDKVKEPRKSRD). The interaction with SAFB2 stretch occupies residues 599-914 (KRSVVSFDKV…PSDARFTRRY (316 aa)). N6-acetyllysine is present on Lys-607. Residues 748–795 (FDHRDRGRYPDHSVDRREGSRSMMGEREGQHYPERHGGPERHGRDSRD) show a composition bias toward basic and acidic residues. Arg-810 carries the omega-N-methylarginine modification. 2 stretches are compositionally biased toward basic and acidic residues: residues 816–831 (PRRDWGDHGRREDDRA) and 840–850 (MMDRDHKRWQG). A Glycyl lysine isopeptide (Lys-Gly) (interchain with G-Cter in SUMO2) cross-link involves residue Lys-846. Asymmetric dimethylarginine occurs at positions 867, 873, and 883. The segment covering 891–900 (GMQGGFGGQS) has biased composition (gly residues). Positions 904–914 (RPSDARFTRRY) are enriched in basic and acidic residues.

In terms of assembly, monomer and homodimer. Interacts with KHDRBS3. Interacts with CLK2. Interacts with POLR2A, ASF/SRSF1, SRp30c/SRFS9 and TRA2B/SFRS10. Interacts with SRPK1 and inhibits its activity. Interacts with RBMX. Interacts with FUS. Interacts with ZBED4. Sumoylated by PIAS1 with SUMO1 and SUMO2/3, desumoylated by SENP1. Sumoylation is required for transcriptional repressor activity.

It localises to the nucleus. Functionally, binds to scaffold/matrix attachment region (S/MAR) DNA and forms a molecular assembly point to allow the formation of a 'transcriptosomal' complex (consisting of SR proteins and RNA polymerase II) coupling transcription and RNA processing. Functions as an estrogen receptor corepressor and can also bind to the HSP27 promoter and decrease its transcription. Thereby acts as a negative regulator of cell proliferation. When associated with RBMX, binds to and stimulates transcription from the SREBF1 promoter. The sequence is that of Scaffold attachment factor B1 (SAFB) from Pongo abelii (Sumatran orangutan).